A 256-amino-acid chain; its full sequence is Thiazole synthase (256 aa).

The active-site Schiff-base intermediate with DXP is lysine 96. Residues glycine 157, 183 to 184 (AG), and 205 to 206 (NT) each bind 1-deoxy-D-xylulose 5-phosphate.

The protein belongs to the ThiG family. As to quaternary structure, homotetramer. Forms heterodimers with either ThiH or ThiS.

It is found in the cytoplasm. The catalysed reaction is [ThiS sulfur-carrier protein]-C-terminal-Gly-aminoethanethioate + 2-iminoacetate + 1-deoxy-D-xylulose 5-phosphate = [ThiS sulfur-carrier protein]-C-terminal Gly-Gly + 2-[(2R,5Z)-2-carboxy-4-methylthiazol-5(2H)-ylidene]ethyl phosphate + 2 H2O + H(+). Its pathway is cofactor biosynthesis; thiamine diphosphate biosynthesis. Its function is as follows. Catalyzes the rearrangement of 1-deoxy-D-xylulose 5-phosphate (DXP) to produce the thiazole phosphate moiety of thiamine. Sulfur is provided by the thiocarboxylate moiety of the carrier protein ThiS. In vitro, sulfur can be provided by H(2)S. The polypeptide is Thiazole synthase (Bacillus cereus (strain 03BB102)).